Here is a 1166-residue protein sequence, read N- to C-terminus: Peroxisomal ATPase PEX6 (1166 aa).

The protein belongs to the AAA ATPase family. In terms of assembly, interacts with PEX1; forming the PEX1-PEX6 AAA ATPase complex, which is composed of a heterohexamer formed by a trimer of PEX1-PEX6 dimers.

Its subcellular location is the membrane. The enzyme catalyses ATP + H2O = ADP + phosphate + H(+). Component of the PEX1-PEX6 AAA ATPase complex involved in peroxisome biosynthesis. The complex acts as a protein dislocase complex that mediates the ATP-dependent extraction of the PEX5 receptor from peroxisomal membranes, an essential step for PEX5 recycling. Specifically recognizes PEX5 monoubiquitinated at 'Cys-6', and pulls it out of the peroxisome lumen through the PEX2-PEX10-PEX12 retrotranslocation channel. Extraction by the PEX1-PEX6 AAA ATPase complex is accompanied by unfolding of the TPR repeats and release of bound cargo from PEX5. The chain is Peroxisomal ATPase PEX6 from Komagataella phaffii (strain GS115 / ATCC 20864) (Yeast).